Here is a 111-residue protein sequence, read N- to C-terminus: uncharacterized protein (111 aa).

It to A.fulgidus AF1864.

This is an uncharacterized protein from Aquifex aeolicus (strain VF5).